The chain runs to 137 residues: NTF2-related export protein (137 aa).

Residues 19–135 (ESKKFMDVYY…YKVKSDRFRY (117 aa)) enclose the NTF2 domain.

As to quaternary structure, preferentially binds Ran-GTP.

It localises to the nucleus. Functionally, stimulator of protein export for NES-containing proteins. Also plays a role in the nuclear export of U1 snRNA, tRNA, and mRNA. The polypeptide is NTF2-related export protein (nxt-1) (Caenorhabditis elegans).